The following is a 429-amino-acid chain: Histidine--tRNA ligase (429 aa).

This sequence belongs to the class-II aminoacyl-tRNA synthetase family. In terms of assembly, homodimer.

The protein resides in the cytoplasm. The catalysed reaction is tRNA(His) + L-histidine + ATP = L-histidyl-tRNA(His) + AMP + diphosphate + H(+). The sequence is that of Histidine--tRNA ligase from Acidovorax ebreus (strain TPSY) (Diaphorobacter sp. (strain TPSY)).